We begin with the raw amino-acid sequence, 367 residues long: GMP synthase [glutamine-hydrolyzing] subunit B (367 aa).

Residues 2-190 enclose the GMPS ATP-PPase domain; the sequence is FDPASFVKEI…LKLPKEISER (189 aa). 29 to 35 serves as a coordination point for ATP; that stretch reads SGGVDST.

As to quaternary structure, heterodimer composed of a glutamine amidotransferase subunit (A) and a GMP-binding subunit (B).

It catalyses the reaction XMP + L-glutamine + ATP + H2O = GMP + L-glutamate + AMP + diphosphate + 2 H(+). It functions in the pathway purine metabolism; GMP biosynthesis; GMP from XMP (L-Gln route): step 1/1. Catalyzes the synthesis of GMP from XMP. In Saccharolobus islandicus (strain M.16.27) (Sulfolobus islandicus), this protein is GMP synthase [glutamine-hydrolyzing] subunit B.